Reading from the N-terminus, the 500-residue chain is Cytochrome P450 71B9 (500 aa).

A helical transmembrane segment spans residues 1–21 (MATIWFLSLLFLCCILLAAFK). Heme is bound at residue Cys-440.

Belongs to the cytochrome P450 family. Heme is required as a cofactor.

Its subcellular location is the membrane. The polypeptide is Cytochrome P450 71B9 (CYP71B9) (Arabidopsis thaliana (Mouse-ear cress)).